The primary structure comprises 504 residues: Xanthotoxol synthase (504 aa).

Residues 3–23 traverse the membrane as a helical segment; the sequence is PAAIFLILAIPIASVYLLFYH. The segment at 363 to 368 is substrate specificity; sequence PGPLLI. Cysteine 444 serves as a coordination point for heme.

The protein belongs to the cytochrome P450 family. Heme is required as a cofactor.

It is found in the microsome membrane. The enzyme catalyses psoralen + reduced [NADPH--hemoprotein reductase] + O2 = xanthotoxol + oxidized [NADPH--hemoprotein reductase] + H2O + H(+). The catalysed reaction is 6-methoxycoumarin + reduced [NADPH--hemoprotein reductase] + O2 = scopoletin + oxidized [NADPH--hemoprotein reductase] + H2O + H(+). Its pathway is secondary metabolite biosynthesis. Its function is as follows. Involved in the biosynthesis of coumarins and furanocoumarins (FCs), natural products required for defense responses against attacks by predators with potential medical and agroindustrial usages such as anticoagulant, rodenticide and artificial vanilla substitutes. Catalyzes the conversion of psoralen into xanthotoxol and of 6-methoxycoumarin into scopoletin. Can also convert with a lower efficiency scopoletin into fraxetin and 7-methoxycoumarin into daphnetin-7-methylether, and use 7-methoxy-3-methylcoumarin as substrate. This Pastinaca sativa (Wild parsnip) protein is Xanthotoxol synthase.